Here is a 298-residue protein sequence, read N- to C-terminus: MRGVDYRWVAALDAVIAQRGFERAAEKLCITQSAVSQRIKQLEKLMAQPLLVREQPPRPTAAGQKLLGLYRRVRLLEQEVLPEITPDDISQPLSVALATNADSLATWLLPALSPLLKSRFIELNLLVEDEARTLDKLRSGEVVGAISMEAGVIPGCVADYLGRMNYLCVASPDFQQKYFSNGVTQANLVSAPGVVFDHHDDMHEVFVQQYFNLPIGSVMKHTVRSSEAFVRIATEGIAYCLIPEVQIQRELDRGDLVNVTPELSLVRNLYWHHWALESGVLTELSERLIQYARQALPQ.

The HTH lysR-type domain occupies 4–60; the sequence is VDYRWVAALDAVIAQRGFERAAEKLCITQSAVSQRIKQLEKLMAQPLLVREQPPRPT. Residues 21–40 constitute a DNA-binding region (H-T-H motif); that stretch reads FERAAEKLCITQSAVSQRIK.

It belongs to the LysR transcriptional regulatory family. Homodimer.

Functionally, controls the transcription of genes involved in arginine and lysine metabolism. The polypeptide is HTH-type transcriptional regulator ArgP (Photobacterium profundum (strain SS9)).